The primary structure comprises 122 residues: Large ribosomal subunit protein uL14 (122 aa).

The protein belongs to the universal ribosomal protein uL14 family. In terms of assembly, part of the 50S ribosomal subunit. Forms a cluster with proteins L3 and L19. In the 70S ribosome, L14 and L19 interact and together make contacts with the 16S rRNA in bridges B5 and B8.

Its function is as follows. Binds to 23S rRNA. Forms part of two intersubunit bridges in the 70S ribosome. The protein is Large ribosomal subunit protein uL14 of Rhodospirillum rubrum (strain ATCC 11170 / ATH 1.1.1 / DSM 467 / LMG 4362 / NCIMB 8255 / S1).